We begin with the raw amino-acid sequence, 172 residues long: Cytidylate kinase (172 aa).

4 to 12 (GPPGSGKST) contributes to the ATP binding site.

Belongs to the cytidylate kinase family. Type 2 subfamily.

The protein resides in the cytoplasm. It catalyses the reaction CMP + ATP = CDP + ADP. The enzyme catalyses dCMP + ATP = dCDP + ADP. In Aeropyrum pernix (strain ATCC 700893 / DSM 11879 / JCM 9820 / NBRC 100138 / K1), this protein is Cytidylate kinase (cmk).